Reading from the N-terminus, the 275-residue chain is Phosphate import ATP-binding protein PstB (275 aa).

An ABC transporter domain is found at 29-270 (LEIKDLDLYY…PNKKKTEDYI (242 aa)). An ATP-binding site is contributed by 61 to 68 (GPSGCGKS).

It belongs to the ABC transporter superfamily. Phosphate importer (TC 3.A.1.7) family. In terms of assembly, the complex is composed of two ATP-binding proteins (PstB), two transmembrane proteins (PstC and PstA) and a solute-binding protein (PstS).

It is found in the cell inner membrane. The enzyme catalyses phosphate(out) + ATP + H2O = ADP + 2 phosphate(in) + H(+). Functionally, part of the ABC transporter complex PstSACB involved in phosphate import. Responsible for energy coupling to the transport system. In Pseudoalteromonas translucida (strain TAC 125), this protein is Phosphate import ATP-binding protein PstB.